Reading from the N-terminus, the 172-residue chain is Transcriptional repressor NrdR (172 aa).

Residues 3–34 (CPFCGAPDTRVIDSRLAGEGDQVRRRRECLSC) fold into a zinc finger. The region spanning 49-139 (PRVVKRDGSR…VYLSFADVQA (91 aa)) is the ATP-cone domain.

The protein belongs to the NrdR family. Zn(2+) serves as cofactor.

Functionally, negatively regulates transcription of bacterial ribonucleotide reductase nrd genes and operons by binding to NrdR-boxes. This is Transcriptional repressor NrdR from Thioalkalivibrio sulfidiphilus (strain HL-EbGR7).